The primary structure comprises 212 residues: Ribosomal RNA small subunit methyltransferase G (212 aa).

Residues Gly80, Leu85, 131–132 (AE), and Arg146 each bind S-adenosyl-L-methionine.

The protein belongs to the methyltransferase superfamily. RNA methyltransferase RsmG family.

It is found in the cytoplasm. It carries out the reaction guanosine(527) in 16S rRNA + S-adenosyl-L-methionine = N(7)-methylguanosine(527) in 16S rRNA + S-adenosyl-L-homocysteine. Specifically methylates the N7 position of guanine in position 527 of 16S rRNA. This chain is Ribosomal RNA small subunit methyltransferase G, found in Xanthomonas oryzae pv. oryzae (strain KACC10331 / KXO85).